The chain runs to 450 residues: Phosphoglucosamine mutase (450 aa).

The active-site Phosphoserine intermediate is the Ser-101. Ser-101, Asp-240, Asp-242, and Asp-244 together coordinate Mg(2+). Residue Ser-101 is modified to Phosphoserine.

Belongs to the phosphohexose mutase family. Mg(2+) serves as cofactor. Activated by phosphorylation.

The enzyme catalyses alpha-D-glucosamine 1-phosphate = D-glucosamine 6-phosphate. Its function is as follows. Catalyzes the conversion of glucosamine-6-phosphate to glucosamine-1-phosphate. This Streptococcus uberis (strain ATCC BAA-854 / 0140J) protein is Phosphoglucosamine mutase.